Consider the following 391-residue polypeptide: Tyrosine recombinase XerC-like (391 aa).

The 85-residue stretch at 64–148 (VTLGDLMHTW…FLKTFFNYAV (85 aa)) folds into the Core-binding (CB) domain. Residues 175–384 (TEIETFSDEE…IPKQKTNAVE (210 aa)) enclose the Tyr recombinase domain. Residues Arg-210, Lys-244, His-335, Arg-338, and His-361 contribute to the active site. Tyr-371 functions as the O-(3'-phospho-DNA)-tyrosine intermediate in the catalytic mechanism.

Belongs to the 'phage' integrase family.

It localises to the cytoplasm. Site-specific tyrosine recombinase, which acts by catalyzing the cutting and rejoining of the recombining DNA molecules. This chain is Tyrosine recombinase XerC-like, found in Caldanaerobacter subterraneus subsp. tengcongensis (strain DSM 15242 / JCM 11007 / NBRC 100824 / MB4) (Thermoanaerobacter tengcongensis).